We begin with the raw amino-acid sequence, 75 residues long: Large ribosomal subunit protein bL31 (75 aa).

The Zn(2+) site is built by Cys16, Cys18, Cys38, and Cys41.

It belongs to the bacterial ribosomal protein bL31 family. Type A subfamily. As to quaternary structure, part of the 50S ribosomal subunit. The cofactor is Zn(2+).

In terms of biological role, binds the 23S rRNA. In Mycolicibacterium smegmatis (strain ATCC 700084 / mc(2)155) (Mycobacterium smegmatis), this protein is Large ribosomal subunit protein bL31.